A 293-amino-acid chain; its full sequence is 4-hydroxy-3-methylbut-2-enyl diphosphate reductase (293 aa).

C12 contributes to the [4Fe-4S] cluster binding site. 2 residues coordinate (2E)-4-hydroxy-3-methylbut-2-enyl diphosphate: H40 and H74. Residues H40 and H74 each coordinate dimethylallyl diphosphate. Residues H40 and H74 each contribute to the isopentenyl diphosphate site. C96 contacts [4Fe-4S] cluster. H128 contributes to the (2E)-4-hydroxy-3-methylbut-2-enyl diphosphate binding site. Position 128 (H128) interacts with dimethylallyl diphosphate. H128 contributes to the isopentenyl diphosphate binding site. E130 acts as the Proton donor in catalysis. T166 is a (2E)-4-hydroxy-3-methylbut-2-enyl diphosphate binding site. C202 is a [4Fe-4S] cluster binding site. (2E)-4-hydroxy-3-methylbut-2-enyl diphosphate-binding residues include S230, S231, N232, and S274. Residues S230, S231, N232, and S274 each coordinate dimethylallyl diphosphate. Residues S230, S231, N232, and S274 each coordinate isopentenyl diphosphate.

The protein belongs to the IspH family. [4Fe-4S] cluster is required as a cofactor.

It catalyses the reaction isopentenyl diphosphate + 2 oxidized [2Fe-2S]-[ferredoxin] + H2O = (2E)-4-hydroxy-3-methylbut-2-enyl diphosphate + 2 reduced [2Fe-2S]-[ferredoxin] + 2 H(+). The catalysed reaction is dimethylallyl diphosphate + 2 oxidized [2Fe-2S]-[ferredoxin] + H2O = (2E)-4-hydroxy-3-methylbut-2-enyl diphosphate + 2 reduced [2Fe-2S]-[ferredoxin] + 2 H(+). It participates in isoprenoid biosynthesis; dimethylallyl diphosphate biosynthesis; dimethylallyl diphosphate from (2E)-4-hydroxy-3-methylbutenyl diphosphate: step 1/1. Its pathway is isoprenoid biosynthesis; isopentenyl diphosphate biosynthesis via DXP pathway; isopentenyl diphosphate from 1-deoxy-D-xylulose 5-phosphate: step 6/6. Its function is as follows. Catalyzes the conversion of 1-hydroxy-2-methyl-2-(E)-butenyl 4-diphosphate (HMBPP) into a mixture of isopentenyl diphosphate (IPP) and dimethylallyl diphosphate (DMAPP). Acts in the terminal step of the DOXP/MEP pathway for isoprenoid precursor biosynthesis. The chain is 4-hydroxy-3-methylbut-2-enyl diphosphate reductase from Cytophaga hutchinsonii (strain ATCC 33406 / DSM 1761 / CIP 103989 / NBRC 15051 / NCIMB 9469 / D465).